The chain runs to 419 residues: UDP-N-acetylglucosamine 1-carboxyvinyltransferase 1 (419 aa).

Phosphoenolpyruvate is bound at residue 22-23 (KN). A UDP-N-acetyl-alpha-D-glucosamine-binding site is contributed by Arg92. Catalysis depends on Cys116, which acts as the Proton donor. Residue Cys116 is modified to 2-(S-cysteinyl)pyruvic acid O-phosphothioketal. Residues 121 to 125 (RPIDL), Asp306, and Ile328 contribute to the UDP-N-acetyl-alpha-D-glucosamine site.

This sequence belongs to the EPSP synthase family. MurA subfamily.

It is found in the cytoplasm. It catalyses the reaction phosphoenolpyruvate + UDP-N-acetyl-alpha-D-glucosamine = UDP-N-acetyl-3-O-(1-carboxyvinyl)-alpha-D-glucosamine + phosphate. It participates in cell wall biogenesis; peptidoglycan biosynthesis. Cell wall formation. Adds enolpyruvyl to UDP-N-acetylglucosamine. The protein is UDP-N-acetylglucosamine 1-carboxyvinyltransferase 1 of Streptococcus agalactiae serotype Ia (strain ATCC 27591 / A909 / CDC SS700).